Reading from the N-terminus, the 81-residue chain is Photosystem I iron-sulfur center (81 aa).

2 consecutive 4Fe-4S ferredoxin-type domains span residues 2–31 (SHSV…MVPW) and 39–68 (IASS…IRVY). Residues Cys11, Cys14, Cys17, Cys21, Cys48, Cys51, Cys54, and Cys58 each coordinate [4Fe-4S] cluster.

In terms of assembly, the cyanobacterial PSI reaction center is composed of one copy each of PsaA,B,C,D,E,F,I,J,K,L,M and X, and forms trimeric complexes. [4Fe-4S] cluster is required as a cofactor.

Its subcellular location is the cellular thylakoid membrane. It carries out the reaction reduced [plastocyanin] + hnu + oxidized [2Fe-2S]-[ferredoxin] = oxidized [plastocyanin] + reduced [2Fe-2S]-[ferredoxin]. Functionally, apoprotein for the two 4Fe-4S centers FA and FB of photosystem I (PSI); essential for photochemical activity. FB is the terminal electron acceptor of PSI, donating electrons to ferredoxin. The C-terminus interacts with PsaA/B/D and helps assemble the protein into the PSI complex. Required for binding of PsaD and PsaE to PSI. PSI is a plastocyanin/cytochrome c6-ferredoxin oxidoreductase, converting photonic excitation into a charge separation, which transfers an electron from the donor P700 chlorophyll pair to the spectroscopically characterized acceptors A0, A1, FX, FA and FB in turn. Mutant proteins with a 3Fe-4S center are unable to reconstitute PSI activity in vivo. The sequence is that of Photosystem I iron-sulfur center from Synechocystis sp. (strain ATCC 27184 / PCC 6803 / Kazusa).